Consider the following 230-residue polypeptide: Ribosome-recycling factor, mitochondrial (230 aa).

Residues 1–24 (MILTTARLNCRPVTVPRLFNRSFS) constitute a mitochondrion transit peptide.

It belongs to the RRF family.

The protein localises to the mitochondrion. Necessary for protein synthesis in mitochondria. Functions as a ribosome recycling factor in mitochondria. In Saccharomyces cerevisiae (strain ATCC 204508 / S288c) (Baker's yeast), this protein is Ribosome-recycling factor, mitochondrial (RRF1).